Here is a 749-residue protein sequence, read N- to C-terminus: MYRKWDLCITRHLLPYIEHSVIPIIALLVLSLIFYILYICFGTTSYILSGIILGAYVNSLFHNNHSVILNIKHPELGEPLKPYQTPLPPELEAPLQLLISKLTQHYINGWYKHVSEDPSFIREVQSTIEYIMRQFYAYVSSQESSHIIYELLKNAISTTTLVLSDLNHFRSKKIPLTEFALRYPESAVSKLLDQASIERTLRAQASAMIVKFSRPEDSACLPLHCLLREVLAMQVFKRITTHCSSPRFVNRCIILYFSSSEDKSDCLAKKNYVNKCLMAKALKDYPVHTNIDPDAGKLSFDDAFYEAHIELHYQFLKEASLNTLIKDKKMLKFIITVRPVHLHVSPWVVYRRYRGFKTLYYLLKKQSARNGRAVPSFPVWRGNTYEKFREGLYFFIEALLHDSHFATNVDVRKFFAKSMRSHPLVDDIYNGFDVDKKHQSSSVPTLPNLTNISRVLSNKTSKSAKPKRSERTGLLSHQSTLAPEPLSQQRDSFELCTTGYRDTGSCTSDDEDSIHEPYRPASTQPTENPPAMPDHNGSPTTEPPKPNAFELKEERLKEIISGGFALVDELCSLNSKLWFFRKSVLTIMKTTVLHGPGRFSAQVERMLKNQIYDKLSNTQLVGDLLTSLILNVWPDEKKAMESHSTRAHRRSTESKISFDSEADSLFEEASKSVPEDPVSVFCDEESDESLRLRAEKTLVENALSENFTLMLGQSTSEESLKIIFELLQEPQFVQGFLAHLLSNALRSII.

The Cytoplasmic segment spans residues 1–20 (MYRKWDLCITRHLLPYIEHS). A helical; Signal-anchor for type II membrane protein transmembrane segment spans residues 21-41 (VIPIIALLVLSLIFYILYICF). Topologically, residues 42–749 (GTTSYILSGI…LLSNALRSII (708 aa)) are lumenal. One can recognise a PXA domain in the interval 88 to 261 (PPELEAPLQL…CIILYFSSSE (174 aa)). In terms of domain architecture, PX spans 311–422 (LHYQFLKEAS…KFFAKSMRSH (112 aa)). Disordered stretches follow at residues 439–489 (QSSS…LSQQ) and 504–546 (GSCT…PPKP). 2 stretches are compositionally biased toward polar residues: residues 440–461 (SSSV…NKTS) and 475–489 (LSHQ…LSQQ).

Belongs to the sorting nexin family.

The protein resides in the endoplasmic reticulum membrane. Functionally, has a role in meiosis. The polypeptide is Meiotically up-regulated gene 122 protein (mug122) (Schizosaccharomyces pombe (strain 972 / ATCC 24843) (Fission yeast)).